We begin with the raw amino-acid sequence, 400 residues long: Iron(III) enterobactin esterase (400 aa).

Belongs to the Fes family.

It is found in the cytoplasm. It catalyses the reaction Fe(III)-enterobactin + 3 H2O + H(+) = Fe(III)-[N-(2,3-dihydroxybenzoyl)-L-serine] + 2 N-(2,3-dihydroxybenzoyl)-L-serine. The catalysed reaction is Fe(III)-enterobactin + H2O = Fe(III)-[N-(2,3-dihydroxybenzoyl)-L-serine]3 + H(+). The enzyme catalyses Fe(III)-[N-(2,3-dihydroxybenzoyl)-L-serine]3 + H2O + H(+) = Fe(III)-[N-(2,3-dihydroxybenzoyl)-L-serine]2 + N-(2,3-dihydroxybenzoyl)-L-serine. It carries out the reaction Fe(III)-[N-(2,3-dihydroxybenzoyl)-L-serine]2 + H2O + H(+) = Fe(III)-[N-(2,3-dihydroxybenzoyl)-L-serine] + N-(2,3-dihydroxybenzoyl)-L-serine. It catalyses the reaction enterobactin + 3 H2O = 3 N-(2,3-dihydroxybenzoyl)-L-serine + 2 H(+). Functionally, catalyzes the hydrolysis of ferric enterobactin (Fe-Ent). Is responsible for the release of iron from ferric enterobactin. Also catalyzes the hydrolysis of iron-free enterobactin (Ent). Hydrolyzes ferric monoglucosyl-C-Ent (Fe-MGE) poorly and does not hydrolyze ferric diglucosyl-C-Ent (Fe-DGE) or ferric triglucosyl-C-Ent (Fe-TGE) at all. Also hydrolyzes apo MGE, but catalyzes the hydrolysis of apo DGE very poorly, and does not process apo TGE at all. The catalytic efficiency for processing Fe-Ent is much higher than that for apo Ent, suggesting that Fe-Ent is the physiological substrate. This Escherichia coli O6:H1 (strain CFT073 / ATCC 700928 / UPEC) protein is Iron(III) enterobactin esterase.